The sequence spans 599 residues: Aspartate--tRNA(Asp/Asn) ligase (599 aa).

Residue glutamate 180 coordinates L-aspartate. The tract at residues glutamine 204–lysine 207 is aspartate. Residue arginine 226 coordinates L-aspartate. ATP is bound by residues arginine 226–glutamate 228 and glutamine 235. Position 457 (histidine 457) interacts with L-aspartate. Position 491 (glutamate 491) interacts with ATP. Position 498 (arginine 498) interacts with L-aspartate. Residue glycine 543–arginine 546 coordinates ATP. The disordered stretch occupies residues lysine 565 to asparagine 599. Positions valine 590–asparagine 599 are enriched in acidic residues.

This sequence belongs to the class-II aminoacyl-tRNA synthetase family. Type 1 subfamily. In terms of assembly, homodimer.

Its subcellular location is the cytoplasm. The catalysed reaction is tRNA(Asx) + L-aspartate + ATP = L-aspartyl-tRNA(Asx) + AMP + diphosphate. Functionally, aspartyl-tRNA synthetase with relaxed tRNA specificity since it is able to aspartylate not only its cognate tRNA(Asp) but also tRNA(Asn). Reaction proceeds in two steps: L-aspartate is first activated by ATP to form Asp-AMP and then transferred to the acceptor end of tRNA(Asp/Asn). The chain is Aspartate--tRNA(Asp/Asn) ligase from Bifidobacterium longum (strain DJO10A).